The sequence spans 280 residues: Digeranylgeranylglyceryl phosphate synthase (280 aa).

The next 9 membrane-spanning stretches (helical) occupy residues 4-24 (AAYLSIIRPVNAVVAGLAGIL), 27-47 (IIATGSIPAEFFWIFCIVLTI), 83-103 (LMYAILLFLIGNGIAILFTPL), 104-124 (PLAGIAMGNSVILWLYASFLK), 128-148 (LIGNISVSYLAASIFLFGGAI), 150-170 (GTQGIISVFPIAGATWGVMLA), 199-219 (ATIYLALISATAGVLMSLLLY), 222-242 (WGAFYLGAIILVDAIILFGAI), and 260-280 (KILKAGMFASLLVFLLSAVLL).

Belongs to the UbiA prenyltransferase family. DGGGP synthase subfamily. It depends on Mg(2+) as a cofactor.

The protein resides in the cell membrane. The enzyme catalyses sn-3-O-(geranylgeranyl)glycerol 1-phosphate + (2E,6E,10E)-geranylgeranyl diphosphate = 2,3-bis-O-(geranylgeranyl)-sn-glycerol 1-phosphate + diphosphate. It functions in the pathway membrane lipid metabolism; glycerophospholipid metabolism. Its function is as follows. Prenyltransferase that catalyzes the transfer of the geranylgeranyl moiety of geranylgeranyl diphosphate (GGPP) to the C2 hydroxyl of (S)-3-O-geranylgeranylglyceryl phosphate (GGGP). This reaction is the second ether-bond-formation step in the biosynthesis of archaeal membrane lipids. In Methanospirillum hungatei JF-1 (strain ATCC 27890 / DSM 864 / NBRC 100397 / JF-1), this protein is Digeranylgeranylglyceryl phosphate synthase.